Here is a 227-residue protein sequence, read N- to C-terminus: Phosphoribosylformylglycinamidine synthase subunit PurQ (227 aa).

Residues 3-225 (FAVIVFPGSN…LRNWRESHVV (223 aa)) form the Glutamine amidotransferase type-1 domain. Catalysis depends on cysteine 86, which acts as the Nucleophile. Catalysis depends on residues histidine 194 and glutamate 196.

As to quaternary structure, part of the FGAM synthase complex composed of 1 PurL, 1 PurQ and 2 PurS subunits.

Its subcellular location is the cytoplasm. The catalysed reaction is N(2)-formyl-N(1)-(5-phospho-beta-D-ribosyl)glycinamide + L-glutamine + ATP + H2O = 2-formamido-N(1)-(5-O-phospho-beta-D-ribosyl)acetamidine + L-glutamate + ADP + phosphate + H(+). It carries out the reaction L-glutamine + H2O = L-glutamate + NH4(+). It participates in purine metabolism; IMP biosynthesis via de novo pathway; 5-amino-1-(5-phospho-D-ribosyl)imidazole from N(2)-formyl-N(1)-(5-phospho-D-ribosyl)glycinamide: step 1/2. In terms of biological role, part of the phosphoribosylformylglycinamidine synthase complex involved in the purines biosynthetic pathway. Catalyzes the ATP-dependent conversion of formylglycinamide ribonucleotide (FGAR) and glutamine to yield formylglycinamidine ribonucleotide (FGAM) and glutamate. The FGAM synthase complex is composed of three subunits. PurQ produces an ammonia molecule by converting glutamine to glutamate. PurL transfers the ammonia molecule to FGAR to form FGAM in an ATP-dependent manner. PurS interacts with PurQ and PurL and is thought to assist in the transfer of the ammonia molecule from PurQ to PurL. This is Phosphoribosylformylglycinamidine synthase subunit PurQ from Halalkalibacterium halodurans (strain ATCC BAA-125 / DSM 18197 / FERM 7344 / JCM 9153 / C-125) (Bacillus halodurans).